Consider the following 474-residue polypeptide: Bifunctional protein GlmU (474 aa).

Positions 1–232 are pyrophosphorylase; sequence MSALDVIIMA…ALQVAGVNSP (232 aa). Residues lysine 23, glutamine 78, 83 to 84, 105 to 107, glycine 142, glutamate 157, and asparagine 230 contribute to the UDP-N-acetyl-alpha-D-glucosamine site; these read GT and SGD. Aspartate 107 lines the Mg(2+) pocket. Residue asparagine 230 participates in Mg(2+) binding. The segment at 233-253 is linker; it reads LQLAELERAHQLAQARALMEQ. The segment at 254–474 is N-acetyltransferase; sequence GVRLADPARF…WQRPAKLPKA (221 aa). 2 residues coordinate UDP-N-acetyl-alpha-D-glucosamine: arginine 349 and lysine 367. Catalysis depends on histidine 379, which acts as the Proton acceptor. UDP-N-acetyl-alpha-D-glucosamine is bound by residues tyrosine 382 and asparagine 393. Acetyl-CoA is bound by residues alanine 396, 402–403, serine 421, glycine 439, and arginine 456; that span reads NY. Residues 454-474 form a disordered region; sequence VARGKQVTKENWQRPAKLPKA.

In the N-terminal section; belongs to the N-acetylglucosamine-1-phosphate uridyltransferase family. It in the C-terminal section; belongs to the transferase hexapeptide repeat family. As to quaternary structure, homotrimer. It depends on Mg(2+) as a cofactor.

The protein resides in the cytoplasm. The enzyme catalyses alpha-D-glucosamine 1-phosphate + acetyl-CoA = N-acetyl-alpha-D-glucosamine 1-phosphate + CoA + H(+). It carries out the reaction N-acetyl-alpha-D-glucosamine 1-phosphate + UTP + H(+) = UDP-N-acetyl-alpha-D-glucosamine + diphosphate. Its pathway is nucleotide-sugar biosynthesis; UDP-N-acetyl-alpha-D-glucosamine biosynthesis; N-acetyl-alpha-D-glucosamine 1-phosphate from alpha-D-glucosamine 6-phosphate (route II): step 2/2. It functions in the pathway nucleotide-sugar biosynthesis; UDP-N-acetyl-alpha-D-glucosamine biosynthesis; UDP-N-acetyl-alpha-D-glucosamine from N-acetyl-alpha-D-glucosamine 1-phosphate: step 1/1. The protein operates within bacterial outer membrane biogenesis; LPS lipid A biosynthesis. Its function is as follows. Catalyzes the last two sequential reactions in the de novo biosynthetic pathway for UDP-N-acetylglucosamine (UDP-GlcNAc). The C-terminal domain catalyzes the transfer of acetyl group from acetyl coenzyme A to glucosamine-1-phosphate (GlcN-1-P) to produce N-acetylglucosamine-1-phosphate (GlcNAc-1-P), which is converted into UDP-GlcNAc by the transfer of uridine 5-monophosphate (from uridine 5-triphosphate), a reaction catalyzed by the N-terminal domain. In Paracidovorax citrulli (strain AAC00-1) (Acidovorax citrulli), this protein is Bifunctional protein GlmU.